Consider the following 234-residue polypeptide: Phosphoglycolate phosphatase (234 aa).

The active-site Nucleophile is the Asp8. Residues Asp8 and Asp10 each contribute to the Mg(2+) site. A substrate-binding site is contributed by Lys157. Mg(2+)-binding residues include Asp180 and Asp184.

It belongs to the archaeal SPP-like hydrolase family. It depends on Mg(2+) as a cofactor.

It carries out the reaction 2-phosphoglycolate + H2O = glycolate + phosphate. Its function is as follows. Catalyzes the dephosphorylation of 2-phosphoglycolate. The chain is Phosphoglycolate phosphatase from Methanoculleus marisnigri (strain ATCC 35101 / DSM 1498 / JR1).